Here is a 92-residue protein sequence, read N- to C-terminus: Small ribosomal subunit protein uS19 (92 aa).

Belongs to the universal ribosomal protein uS19 family.

Functionally, protein S19 forms a complex with S13 that binds strongly to the 16S ribosomal RNA. The sequence is that of Small ribosomal subunit protein uS19 from Borreliella afzelii (strain PKo) (Borrelia afzelii).